Consider the following 337-residue polypeptide: DNA-directed RNA polymerase subunit alpha (337 aa).

The tract at residues methionine 1–glutamate 233 is alpha N-terminal domain (alpha-NTD). An alpha C-terminal domain (alpha-CTD) region spans residues phenylalanine 249–tyrosine 337.

Belongs to the RNA polymerase alpha chain family. Homodimer. The RNAP catalytic core consists of 2 alpha, 1 beta, 1 beta' and 1 omega subunit. When a sigma factor is associated with the core the holoenzyme is formed, which can initiate transcription.

It carries out the reaction RNA(n) + a ribonucleoside 5'-triphosphate = RNA(n+1) + diphosphate. In terms of biological role, DNA-dependent RNA polymerase catalyzes the transcription of DNA into RNA using the four ribonucleoside triphosphates as substrates. The sequence is that of DNA-directed RNA polymerase subunit alpha from Brucella melitensis biotype 2 (strain ATCC 23457).